The sequence spans 209 residues: ATP-dependent Clp protease proteolytic subunit (209 aa).

The Nucleophile role is filled by S107. Residue H132 is part of the active site.

This sequence belongs to the peptidase S14 family. In terms of assembly, fourteen ClpP subunits assemble into 2 heptameric rings which stack back to back to give a disk-like structure with a central cavity, resembling the structure of eukaryotic proteasomes.

It is found in the cytoplasm. The catalysed reaction is Hydrolysis of proteins to small peptides in the presence of ATP and magnesium. alpha-casein is the usual test substrate. In the absence of ATP, only oligopeptides shorter than five residues are hydrolyzed (such as succinyl-Leu-Tyr-|-NHMec, and Leu-Tyr-Leu-|-Tyr-Trp, in which cleavage of the -Tyr-|-Leu- and -Tyr-|-Trp bonds also occurs).. Cleaves peptides in various proteins in a process that requires ATP hydrolysis. Has a chymotrypsin-like activity. Plays a major role in the degradation of misfolded proteins. This Methylobacterium nodulans (strain LMG 21967 / CNCM I-2342 / ORS 2060) protein is ATP-dependent Clp protease proteolytic subunit.